The sequence spans 689 residues: Glycine--tRNA ligase beta subunit (689 aa).

It belongs to the class-II aminoacyl-tRNA synthetase family. Tetramer of two alpha and two beta subunits.

It is found in the cytoplasm. It carries out the reaction tRNA(Gly) + glycine + ATP = glycyl-tRNA(Gly) + AMP + diphosphate. The polypeptide is Glycine--tRNA ligase beta subunit (Shewanella halifaxensis (strain HAW-EB4)).